The primary structure comprises 416 residues: Phosphoglycerate kinase (416 aa).

Positions 23, 24, 25, 26, 38, 39, 62, 63, 65, 66, 121, 122, 168, and 169 each coordinate (2R)-3-phosphoglycerate. G212 provides a ligand contact to ADP. G212 serves as a coordination point for CDP. Residues A213 and K214 each coordinate AMP. ATP is bound at residue A213. A213 contacts Mg(2+). D217 contacts CDP. D217 contributes to the Mg(2+) binding site. K218 serves as a coordination point for AMP. K218 serves as a coordination point for ATP. G236 serves as a coordination point for ADP. G236 is a CDP binding site. Residues G237 and G311 each coordinate AMP. ATP contacts are provided by G237 and G311. The CDP site is built by G336 and F341. F341 serves as a coordination point for ADP. E342 serves as a coordination point for AMP. 3 residues coordinate ATP: E342, D373, and T374. D373 contacts Mg(2+).

The protein belongs to the phosphoglycerate kinase family. In terms of assembly, monomer. The cofactor is Mg(2+).

The protein localises to the cytoplasm. The protein resides in the mitochondrion. It catalyses the reaction (2R)-3-phosphoglycerate + ATP = (2R)-3-phospho-glyceroyl phosphate + ADP. It functions in the pathway carbohydrate degradation; glycolysis; pyruvate from D-glyceraldehyde 3-phosphate: step 2/5. Its function is as follows. Catalyzes one of the two ATP producing reactions in the glycolytic pathway via the reversible conversion of 1,3-diphosphoglycerate to 3-phosphoglycerate. Both L- and D- forms of purine and pyrimidine nucleotides can be used as substrates, but the activity is much lower on pyrimidines. Negatively regulates the biosynthesis of acetyl-CoA from pyruvate in the mitochondrion. The polypeptide is Phosphoglycerate kinase (PGK1) (Komagataella pastoris (Yeast)).